A 153-amino-acid chain; its full sequence is ORM1-like protein 1 (153 aa).

At 1–26 (MNVGVAHSEVNPNTRVMNSRGMWLTY) the chain is on the cytoplasmic side. The next 2 membrane-spanning stretches (helical) occupy residues 27-46 (ALGV…FSVP) and 47-64 (VAWT…YVFL). The Cytoplasmic portion of the chain corresponds to 65–100 (HAVKGTPFETPDQGKARLLTHWEQLDYGVQFTSSRK). The helical transmembrane segment at 101 to 121 (FFTISPIILYFLASFYTKYDT) threads the bilayer. The Extracellular portion of the chain corresponds to 122 to 123 (TH). Residues 124-140 (FILNTASLLSVLIPKMP) traverse the membrane as a helical segment. Residues 141 to 153 (QLHGVRIFGINKY) are Cytoplasmic-facing.

The protein belongs to the ORM family. As to quaternary structure, ceramide-sensitive subunit of the serine palmitoyltransferase (SPT) complex, which is also composed of SPTLC1, SPTLC2/3 and SPTSSA/B.

The protein resides in the endoplasmic reticulum membrane. Plays an essential role in the homeostatic regulation of sphingolipid de novo biosynthesis by modulating the activity of the serine palmitoyltransferase (SPT) in response to ceramide levels. When complexed to SPT, the binding of ceramides to its N-terminus stabilizes a conformation that block SPT substrate entry, hence preventing SPT catalytic activity. Through this mechanism, maintains ceramide levels at sufficient concentrations for the production of complex sphingolipids, but which prevents the accumulation of ceramides to levels that trigger apoptosis. The polypeptide is ORM1-like protein 1 (ORMDL1) (Bos taurus (Bovine)).